The sequence spans 366 residues: D-alanine--D-alanine ligase (366 aa).

In terms of domain architecture, ATP-grasp spans 144 to 347; the sequence is KRLLKDAGLK…YRELIENLIE (204 aa). An ATP-binding site is contributed by 174-229; that stretch reads KEELGLPMFIKPANQGSSVGVHKVENEEQFYSAIKDAFQFDHKLLVEEAIVGREIE. Asp-301, Glu-314, and Asn-316 together coordinate Mg(2+).

Belongs to the D-alanine--D-alanine ligase family. Mg(2+) is required as a cofactor. The cofactor is Mn(2+).

It is found in the cytoplasm. The catalysed reaction is 2 D-alanine + ATP = D-alanyl-D-alanine + ADP + phosphate + H(+). The protein operates within cell wall biogenesis; peptidoglycan biosynthesis. Its function is as follows. Cell wall formation. The polypeptide is D-alanine--D-alanine ligase (Oceanobacillus iheyensis (strain DSM 14371 / CIP 107618 / JCM 11309 / KCTC 3954 / HTE831)).